The following is a 311-amino-acid chain: tRNA dimethylallyltransferase (311 aa).

8 to 15 (GPTGVGKS) is an ATP binding site. Residue 10-15 (TGVGKS) participates in substrate binding.

Belongs to the IPP transferase family. Monomer. Requires Mg(2+) as cofactor.

The catalysed reaction is adenosine(37) in tRNA + dimethylallyl diphosphate = N(6)-dimethylallyladenosine(37) in tRNA + diphosphate. Its function is as follows. Catalyzes the transfer of a dimethylallyl group onto the adenine at position 37 in tRNAs that read codons beginning with uridine, leading to the formation of N6-(dimethylallyl)adenosine (i(6)A). This chain is tRNA dimethylallyltransferase, found in Mycobacterium leprae (strain Br4923).